The primary structure comprises 210 residues: NADH dehydrogenase [ubiquinone] iron-sulfur protein 8, mitochondrial (210 aa).

The N-terminal 34 residues, 1–34 (MRCLTTPVLLRALAQAARAGPPGGRSLHSSAVAA), are a transit peptide targeting the mitochondrion. 4Fe-4S ferredoxin-type domains follow at residues 102–131 (RRYP…IEAE) and 141–170 (TRYD…EGPN). [4Fe-4S] cluster contacts are provided by C111, C114, C117, C121, C150, C153, C156, and C160.

It belongs to the complex I 23 kDa subunit family. In terms of assembly, core subunit of respiratory chain NADH dehydrogenase (Complex I) which is composed of 45 different subunits. This is a component of the iron-sulfur (IP) fragment of the enzyme. Interacts with RAB5IF. The cofactor is [4Fe-4S] cluster.

The protein resides in the mitochondrion inner membrane. The catalysed reaction is a ubiquinone + NADH + 5 H(+)(in) = a ubiquinol + NAD(+) + 4 H(+)(out). In terms of biological role, core subunit of the mitochondrial membrane respiratory chain NADH dehydrogenase (Complex I) which catalyzes electron transfer from NADH through the respiratory chain, using ubiquinone as an electron acceptor. Essential for the catalytic activity and assembly of complex I. This is NADH dehydrogenase [ubiquinone] iron-sulfur protein 8, mitochondrial (NDUFS8) from Gorilla gorilla gorilla (Western lowland gorilla).